The primary structure comprises 130 residues: Lysozyme C (130 aa).

The region spanning 1–130 (KIYERCELAR…LTPYIRGCGV (130 aa)) is the C-type lysozyme domain. Intrachain disulfides connect C6–C128, C30–C116, C65–C81, and C77–C95. Catalysis depends on residues E35 and D53.

The protein belongs to the glycosyl hydrolase 22 family. Monomer.

The protein localises to the secreted. It carries out the reaction Hydrolysis of (1-&gt;4)-beta-linkages between N-acetylmuramic acid and N-acetyl-D-glucosamine residues in a peptidoglycan and between N-acetyl-D-glucosamine residues in chitodextrins.. In terms of biological role, lysozymes have primarily a bacteriolytic function; those in tissues and body fluids are associated with the monocyte-macrophage system and enhance the activity of immunoagents. The protein is Lysozyme C (LYZ) of Oryctolagus cuniculus (Rabbit).